We begin with the raw amino-acid sequence, 285 residues long: Vacuolar protein sorting-associated protein 37B (285 aa).

Positions 50–170 (ASNRSLAEGN…EMVLKGQRLP (121 aa)) are interaction with IST1. One can recognise a VPS37 C-terminal domain in the interval 84–173 (FEAYQIKKTK…LKGQRLPQAL (90 aa)). The interval 175 to 201 (PLPPRLPELAPTAPLPYPAPEASGPPA) is disordered. Arg-218 carries the omega-N-methylarginine modification. The interval 230–285 (GQAVPYPGLQCPPLPPRVGLPTQQGFSSQFVSPYPPPLPQRPPPRLPPHQPGFILQ) is disordered. The span at 250–260 (PTQQGFSSQFV) shows a compositional bias: polar residues. The span at 262 to 279 (PYPPPLPQRPPPRLPPHQ) shows a compositional bias: pro residues.

The protein belongs to the VPS37 family. As to quaternary structure, component of the ESCRT-I complex (endosomal sorting complex required for transport I) which consists of TSG101, VPS28, a VPS37 protein (VPS37A to -D) and MVB12A or MVB12B in a 1:1:1:1 stoichiometry. Interacts with TSG101, VPS28, MVB12A and MVB12B. Component of the ESCRT-I complex (endosomal sorting complex required for transport I) which consists of TSG101, VPS28, a VPS37 protein (VPS37A to -D) and UBAP1 in a 1:1:1:1 stoichiometry. Interacts with CEP55. Interacts with IST1. Widely expressed. Expressed in macrophages and lymphocytes.

It localises to the late endosome membrane. Functionally, component of the ESCRT-I complex, a regulator of vesicular trafficking process. Required for the sorting of endocytic ubiquitinated cargos into multivesicular bodies. May be involved in cell growth and differentiation. This is Vacuolar protein sorting-associated protein 37B (VPS37B) from Homo sapiens (Human).